Reading from the N-terminus, the 478-residue chain is UDP-N-acetylmuramate--L-alanine ligase (478 aa).

112-118 (GTHGKTT) lines the ATP pocket.

This sequence belongs to the MurCDEF family.

The protein localises to the cytoplasm. The catalysed reaction is UDP-N-acetyl-alpha-D-muramate + L-alanine + ATP = UDP-N-acetyl-alpha-D-muramoyl-L-alanine + ADP + phosphate + H(+). It participates in cell wall biogenesis; peptidoglycan biosynthesis. Functionally, cell wall formation. In Polynucleobacter asymbioticus (strain DSM 18221 / CIP 109841 / QLW-P1DMWA-1) (Polynucleobacter necessarius subsp. asymbioticus), this protein is UDP-N-acetylmuramate--L-alanine ligase.